A 262-amino-acid polypeptide reads, in one-letter code: Demethyldecarbamoylnovobiocin O-methyltransferase (262 aa).

64–65 lines the S-adenosyl-L-methionine pocket; sequence TM. The Proton acceptor role is filled by Glu72. Residues 92–96, 122–126, Phe178, 196–197, and Ser202 contribute to the S-adenosyl-L-methionine site; these read ETGVW, DSFQG, and DG. Asp196 serves as a coordination point for Mg(2+). Mg(2+) contacts are provided by Asp223 and Asp224.

Belongs to the methyltransferase TylF/MycF family. In terms of assembly, homodimer. Mg(2+) serves as cofactor.

The catalysed reaction is desmethyldescarbamoylnovobiocin + S-adenosyl-L-methionine = descarbamoylnovobiocin + S-adenosyl-L-homocysteine + H(+). Its pathway is antibiotic biosynthesis; novobiocin biosynthesis. Its function is as follows. S-adenosyl-L-methionine-dependent O-methyltransferase that methylates at 4-OH of the noviose moiety, the penultimate step in the novobiocin biosynthesis pathway. Novobiocin is an aminocoumarin family antibiotic that targets bacterial DNA gyrases. In Streptomyces niveus (Streptomyces spheroides), this protein is Demethyldecarbamoylnovobiocin O-methyltransferase (novP).